The chain runs to 409 residues: Elongation factor Tu (409 aa).

The region spanning 10 to 214 (KPHVNIGTIG…AVDSYIPDPE (205 aa)) is the tr-type G domain. The G1 stretch occupies residues 19–26 (GHVDHGKT). Residue 19 to 26 (GHVDHGKT) coordinates GTP. Thr-26 is a binding site for Mg(2+). Positions 60-64 (GITIN) are G2. The segment at 81–84 (DCPG) is G3. GTP contacts are provided by residues 81 to 85 (DCPGH) and 136 to 139 (NKED). Residues 136 to 139 (NKED) form a G4 region. The interval 174 to 176 (SGL) is G5.

Belongs to the TRAFAC class translation factor GTPase superfamily. Classic translation factor GTPase family. EF-Tu/EF-1A subfamily. Monomer.

The protein resides in the cytoplasm. It carries out the reaction GTP + H2O = GDP + phosphate + H(+). Functionally, GTP hydrolase that promotes the GTP-dependent binding of aminoacyl-tRNA to the A-site of ribosomes during protein biosynthesis. This is Elongation factor Tu from Trichormus variabilis (strain ATCC 29413 / PCC 7937) (Anabaena variabilis).